Consider the following 375-residue polypeptide: Alanine racemase (375 aa).

The active-site Proton acceptor; specific for D-alanine is the lysine 41. Lysine 41 bears the N6-(pyridoxal phosphate)lysine mark. Arginine 141 is a binding site for substrate. The active-site Proton acceptor; specific for L-alanine is the tyrosine 270. A substrate-binding site is contributed by methionine 317.

The protein belongs to the alanine racemase family. Pyridoxal 5'-phosphate serves as cofactor.

The catalysed reaction is L-alanine = D-alanine. Its pathway is amino-acid biosynthesis; D-alanine biosynthesis; D-alanine from L-alanine: step 1/1. Catalyzes the interconversion of L-alanine and D-alanine. May also act on other amino acids. This is Alanine racemase (alr) from Lactiplantibacillus plantarum (strain ATCC BAA-793 / NCIMB 8826 / WCFS1) (Lactobacillus plantarum).